The following is a 145-amino-acid chain: Small ribosomal subunit protein uS17c (145 aa).

A chloroplast-targeting transit peptide spans 1-36 (MLLTTPFVSSPVRVQGNGGSGASPWAGAATALRIQA). The segment at 101–145 (KTKHFLAVPLPPRDTRRKSQLLPPLQSQSQSQDQDQPPTPPPSSD) is disordered. Positions 120–136 (QLLPPLQSQSQSQDQDQ) are enriched in low complexity.

It belongs to the universal ribosomal protein uS17 family. As to quaternary structure, part of the 30S ribosomal subunit.

The protein resides in the plastid. It is found in the chloroplast. One of the primary rRNA binding proteins, it binds specifically to the 5'-end of 16S ribosomal RNA. The sequence is that of Small ribosomal subunit protein uS17c (RPS17) from Oryza sativa subsp. japonica (Rice).